A 26-amino-acid chain; its full sequence is Melittin (26 aa).

Residue glycine 1 is modified to N-formylglycine; partial. Glutamate 26 carries the post-translational modification Glutamic acid 1-amide.

Belongs to the melittin family. As to quaternary structure, monomer (in solution and for integration into membranes), homotetramer (in solution and potentially as a toroidal pore in membranes), and potenially homomultimer (as a toroidal pore in membranes). Expressed by the venom gland.

The protein localises to the secreted. It localises to the target cell membrane. Functionally, main toxin of bee venom with strong hemolytic activity and antimicrobial activity. It has enhancing effects on bee venom phospholipase A2 activity. This amphipathic toxin binds to negatively charged membrane surface and forms pore by inserting into lipid bilayers inducing the leakage of ions and molecules and the enhancement of permeability that ultimately leads to cell lysis. It acts as a voltage-gated pore with higher selectivity for anions over cations. The ion conductance has been shown to be voltage-dependent. Self-association of melittin in membranes is promoted by high ionic strength, but not by the presence of negatively charged lipids. In vivo, intradermal injection into healthy human volunteers produce sharp pain sensation and an inflammatory response. It produces pain by activating primary nociceptor cells directly and indirectly due to its ability to activate plasma membrane phospholipase A2 and its pore-forming activity. This is Melittin (MELT) from Apis dorsata (Giant honeybee).